The primary structure comprises 529 residues: Plexin domain-containing protein 2 (529 aa).

Residues 1 to 30 (MARFPKADLAAAGVMLLCHFFTDQFQFADG) form the signal peptide. The Extracellular portion of the chain corresponds to 31-454 (KPGDQILDWQ…AEKKGGTLHA (424 aa)). A disordered region spans residues 80 to 104 (ASVGQDSPEPRSFTDLLLDDGQDNN). N-linked (GlcNAc...) asparagine glycosylation is found at Asn-103 and Asn-160. Residues 327–372 (TCLQFNRCGPCVSSQIGFNCSWCSKLQRCSSGFDRHRQDWVDSGCP) enclose the PSI domain. A helical transmembrane segment spans residues 455-475 (GLIIGILILVLIVATAILVTV). At 476 to 529 (YMYHHPTSAASIFFIERRPSRWPAMKFRRGSGHPAYAEVEPVGEKEGFIVSEQC) the chain is on the cytoplasmic side. At Ser-506 the chain carries Phosphoserine.

Belongs to the plexin family. In terms of assembly, interacts with CTTN. Expressed in the endothelial cells of the stroma but not in the endothelial cells of normal colonic tissue.

Its subcellular location is the membrane. Functionally, may play a role in tumor angiogenesis. The chain is Plexin domain-containing protein 2 (PLXDC2) from Homo sapiens (Human).